The following is a 433-amino-acid chain: LanC-like protein GCL1 (433 aa).

Residues 1–22 are disordered; it reads MSSSVDFVTEQGRCGDDGNGAG.

It belongs to the LanC-like protein family.

Functionally, may play a role in signaling. May be not involved in abscisic acid (ABA) signaling. The chain is LanC-like protein GCL1 (GCL1) from Arabidopsis thaliana (Mouse-ear cress).